The following is a 447-amino-acid chain: UDP-N-acetylmuramoylalanine--D-glutamate ligase (447 aa).

112-118 (GTNGKST) contributes to the ATP binding site.

This sequence belongs to the MurCDEF family.

Its subcellular location is the cytoplasm. It carries out the reaction UDP-N-acetyl-alpha-D-muramoyl-L-alanine + D-glutamate + ATP = UDP-N-acetyl-alpha-D-muramoyl-L-alanyl-D-glutamate + ADP + phosphate + H(+). It functions in the pathway cell wall biogenesis; peptidoglycan biosynthesis. Cell wall formation. Catalyzes the addition of glutamate to the nucleotide precursor UDP-N-acetylmuramoyl-L-alanine (UMA). The sequence is that of UDP-N-acetylmuramoylalanine--D-glutamate ligase from Legionella pneumophila subsp. pneumophila (strain Philadelphia 1 / ATCC 33152 / DSM 7513).